Reading from the N-terminus, the 218-residue chain is Protein N-lysine methyltransferase METTL21A (218 aa).

S-adenosyl-L-methionine-binding positions include tryptophan 47, glycine 73–glycine 75, aspartate 94, tryptophan 125, and alanine 143.

The protein belongs to the methyltransferase superfamily. METTL21 family.

It localises to the cytoplasm. The enzyme catalyses L-lysyl-[protein] + 3 S-adenosyl-L-methionine = N(6),N(6),N(6)-trimethyl-L-lysyl-[protein] + 3 S-adenosyl-L-homocysteine + 3 H(+). Its function is as follows. Protein-lysine methyltransferase that selectively trimethylates residues in heat shock protein 70 (HSP70) family members. This chain is Protein N-lysine methyltransferase METTL21A (mettl21a), found in Danio rerio (Zebrafish).